A 350-amino-acid chain; its full sequence is Selenide, water dikinase (350 aa).

Sec-15 is a catalytic residue. A non-standard amino acid (selenocysteine) is located at residue Sec-15. Residues Lys-18 and 47 to 49 contribute to the ATP site; that span reads HNE. A Mg(2+)-binding site is contributed by Asp-50. ATP contacts are provided by residues Asp-67, Asp-90, and 138-140; that span reads GHS. Asp-90 provides a ligand contact to Mg(2+). Asp-227 is a Mg(2+) binding site.

This sequence belongs to the selenophosphate synthase 1 family. Class I subfamily. As to quaternary structure, homodimer. It depends on Mg(2+) as a cofactor.

The catalysed reaction is hydrogenselenide + ATP + H2O = selenophosphate + AMP + phosphate + 2 H(+). Its function is as follows. Synthesizes selenophosphate from selenide and ATP. This Nitratidesulfovibrio vulgaris (strain DSM 19637 / Miyazaki F) (Desulfovibrio vulgaris) protein is Selenide, water dikinase.